Reading from the N-terminus, the 226-residue chain is ATP synthase subunit C lysine N-methyltransferase (226 aa).

The chain crosses the membrane as a helical span at residues 35 to 55; that stretch reads VIGGTLVALYAVATPFVAPAL. A required for mitochondrial location region spans residues 48 to 82; it reads TPFVAPALRKLCLPYVPATTTQVKNVLKMLRSRTG.

Belongs to the ANT/ATPSC lysine N-methyltransferase family.

It localises to the mitochondrion membrane. Its function is as follows. Mitochondrial protein-lysine N-methyltransferase that promotes chronic pain. Involved in persistent inflammatory and neuropathic pain: methyltransferase activity in the mitochondria of sensory neurons promotes chronic pain via a pathway that depends on the production of reactive oxygen species (ROS) and on the engagement of spinal cord microglia. Protein-lysine N-methyltransferase activity is dependent on S-adenosyl-L-methionine. The chain is ATP synthase subunit C lysine N-methyltransferase (atpsckmt) from Xenopus laevis (African clawed frog).